Here is a 130-residue protein sequence, read N- to C-terminus: ATP synthase epsilon chain (130 aa).

This sequence belongs to the ATPase epsilon chain family. In terms of assembly, F-type ATPases have 2 components, CF(1) - the catalytic core - and CF(0) - the membrane proton channel. CF(1) has five subunits: alpha(3), beta(3), gamma(1), delta(1), epsilon(1). CF(0) has three main subunits: a, b and c.

Its subcellular location is the cell inner membrane. Produces ATP from ADP in the presence of a proton gradient across the membrane. This Campylobacter hominis (strain ATCC BAA-381 / DSM 21671 / CCUG 45161 / LMG 19568 / NCTC 13146 / CH001A) protein is ATP synthase epsilon chain.